We begin with the raw amino-acid sequence, 258 residues long: Acyl-[acyl-carrier-protein]--UDP-N-acetylglucosamine O-acyltransferase (258 aa).

It belongs to the transferase hexapeptide repeat family. LpxA subfamily. As to quaternary structure, homotrimer.

The protein resides in the cytoplasm. It carries out the reaction a (3R)-hydroxyacyl-[ACP] + UDP-N-acetyl-alpha-D-glucosamine = a UDP-3-O-[(3R)-3-hydroxyacyl]-N-acetyl-alpha-D-glucosamine + holo-[ACP]. It functions in the pathway glycolipid biosynthesis; lipid IV(A) biosynthesis; lipid IV(A) from (3R)-3-hydroxytetradecanoyl-[acyl-carrier-protein] and UDP-N-acetyl-alpha-D-glucosamine: step 1/6. In terms of biological role, involved in the biosynthesis of lipid A, a phosphorylated glycolipid that anchors the lipopolysaccharide to the outer membrane of the cell. This Pseudomonas putida (strain ATCC 47054 / DSM 6125 / CFBP 8728 / NCIMB 11950 / KT2440) protein is Acyl-[acyl-carrier-protein]--UDP-N-acetylglucosamine O-acyltransferase.